A 518-amino-acid chain; its full sequence is UDP-N-acetylmuramate--L-alanine ligase (518 aa).

158-164 (GTHGKTT) contacts ATP.

It belongs to the MurCDEF family.

The protein localises to the cytoplasm. It carries out the reaction UDP-N-acetyl-alpha-D-muramate + L-alanine + ATP = UDP-N-acetyl-alpha-D-muramoyl-L-alanine + ADP + phosphate + H(+). It participates in cell wall biogenesis; peptidoglycan biosynthesis. Cell wall formation. The chain is UDP-N-acetylmuramate--L-alanine ligase from Crocosphaera subtropica (strain ATCC 51142 / BH68) (Cyanothece sp. (strain ATCC 51142)).